Consider the following 258-residue polypeptide: Pro-thyrotropin-releasing hormone-A (258 aa).

Residues 1–22 form the signal peptide; that stretch reads MKSACLIILASLVVCNLTLARG. The residue at position 78 (glutamine 78) is a Pyrrolidone carboxylic acid. Proline 80 carries the proline amide modification. Basic and acidic residues-rich tracts occupy residues 84-98 and 107-119; these read YQEE…GKRE and EVQK…KRED. Positions 84–124 are disordered; the sequence is YQEELEKRQHPGKREEDEDEDYDEVQKRQHPGKREDEFDSF. At glutamine 92 the chain carries Pyrrolidone carboxylic acid. Position 94 is a proline amide (proline 94). A Pyrrolidone carboxylic acid modification is found at glutamine 112. Residue proline 114 is modified to Proline amide. A Pyrrolidone carboxylic acid modification is found at glutamine 131. The residue at position 133 (proline 133) is a Proline amide. Glutamine 156 is modified (pyrrolidone carboxylic acid). The residue at position 158 (proline 158) is a Proline amide. Disordered regions lie at residues 166 to 215 and 236 to 258; these read YSKR…PCDV and SRAE…TEQE. Glutamine 170 carries the pyrrolidone carboxylic acid modification. Proline 172 bears the Proline amide mark. The segment covering 184-193 has biased composition (basic and acidic residues); the sequence is GDLRELEKRQ. Glutamine 193 carries the post-translational modification Pyrrolidone carboxylic acid. A Proline amide modification is found at proline 195. A Pyrrolidone carboxylic acid modification is found at glutamine 242. Proline 244 is modified (proline amide).

This sequence belongs to the TRH family.

It is found in the secreted. Functions as a regulator of the biosynthesis of TSH in the anterior pituitary gland and as a neurotransmitter/ neuromodulator in the central and peripheral nervous systems. The sequence is that of Pro-thyrotropin-releasing hormone-A (trha) from Oncorhynchus nerka (Sockeye salmon).